We begin with the raw amino-acid sequence, 119 residues long: Beta-2-microglobulin (119 aa).

A signal peptide spans 1 to 20; the sequence is MARFVVVALLVLLSLSGLEA. The 90-residue stretch at 25 to 114 folds into the Ig-like C1-type domain; that stretch reads PKIQVYSRHP…VTLSTPKTVK (90 aa). Cys45 and Cys100 are disulfide-bonded.

The protein belongs to the beta-2-microglobulin family. Heterodimer of an alpha chain and a beta chain. Beta-2-microglobulin is the beta-chain of major histocompatibility complex class I molecules.

Its subcellular location is the secreted. Component of the class I major histocompatibility complex (MHC). Involved in the presentation of peptide antigens to the immune system. The protein is Beta-2-microglobulin (B2M) of Aotus azarae (Azara's night monkey).